A 317-amino-acid polypeptide reads, in one-letter code: MGEVQREKVAVIIGPTAVGKTKLSIDLAKALNGEIISGDSMQIYRTMDIGTAKVTQAEMDGIPHYMVDIKNPEDSFSVAEFQERVRKHIREITERGKLPIIVGGTGLYIQSVLFDYQFTDDAGDVIYREQMEKLALERGVEYVHKKLQEVDPESAERIHANNVRRVIRALEIFHTTGEKMSDQIEKQEKELLYDVSLIGLTMDREMLYDRINLRVDLMMEQGLLEEVEGLYNRGIRDCQSIQAIGYKEIYDYFENRASLEDAVSQLKTNSRRYAKRQLTWFRNKMDVTWFDVTDGEKTSEILRYIEGKLQVKSNNSK.

Residue 14–21 (GPTAVGKT) coordinates ATP. 16–21 (TAVGKT) provides a ligand contact to substrate. The segment at 39-42 (DSMQ) is interaction with substrate tRNA.

This sequence belongs to the IPP transferase family. As to quaternary structure, monomer. It depends on Mg(2+) as a cofactor.

The enzyme catalyses adenosine(37) in tRNA + dimethylallyl diphosphate = N(6)-dimethylallyladenosine(37) in tRNA + diphosphate. Its function is as follows. Catalyzes the transfer of a dimethylallyl group onto the adenine at position 37 in tRNAs that read codons beginning with uridine, leading to the formation of N6-(dimethylallyl)adenosine (i(6)A). The chain is tRNA dimethylallyltransferase from Bacillus cereus (strain G9842).